The sequence spans 71 residues: Protein SlyX homolog (71 aa).

Positions 52–71 (RLDQAESSAGAPANERPPHY) are disordered.

Belongs to the SlyX family.

The polypeptide is Protein SlyX homolog (Rhodopseudomonas palustris (strain ATCC BAA-98 / CGA009)).